The primary structure comprises 304 residues: Acetaldehyde dehydrogenase 1 (304 aa).

An NAD(+)-binding site is contributed by 11–14; sequence SGNI. Residue Cys130 is the Acyl-thioester intermediate of the active site. Residues 161–169 and Asn272 each bind NAD(+); that span reads SVGPGTRAN.

This sequence belongs to the acetaldehyde dehydrogenase family.

The catalysed reaction is acetaldehyde + NAD(+) + CoA = acetyl-CoA + NADH + H(+). The protein is Acetaldehyde dehydrogenase 1 (lapF) of Azoarcus sp. (strain BH72).